The primary structure comprises 78 residues: Acyl carrier protein (78 aa).

One can recognise a Carrier domain in the interval 2-77 (STIEERVKKI…AAIDFINANQ (76 aa)). Ser37 is modified (O-(pantetheine 4'-phosphoryl)serine).

It belongs to the acyl carrier protein (ACP) family. In terms of processing, 4'-phosphopantetheine is transferred from CoA to a specific serine of apo-ACP by AcpS. This modification is essential for activity because fatty acids are bound in thioester linkage to the sulfhydryl of the prosthetic group.

Its subcellular location is the cytoplasm. It participates in lipid metabolism; fatty acid biosynthesis. Functionally, carrier of the growing fatty acid chain in fatty acid biosynthesis. In Yersinia pseudotuberculosis serotype O:1b (strain IP 31758), this protein is Acyl carrier protein.